The primary structure comprises 609 residues: Polyadenylate-binding protein 7 (609 aa).

RRM domains follow at residues 24-102 (ASLY…WSVR), 112-189 (GNVF…KFMK), 201-278 (TNLY…RAQK), and 304-381 (SNIY…IAQK). One can recognise a PABC domain in the interval 509–586 (EMKKSIQQRQ…AFEVLKSSKT (78 aa)).

It belongs to the polyadenylate-binding protein type-1 family. In terms of tissue distribution, expressed predominantly in siliques.

It localises to the cytoplasm. Its subcellular location is the nucleus. Binds the poly(A) tail of mRNA. Appears to be an important mediator of the multiple roles of the poly(A) tail in mRNA biogenesis, stability and translation. This is Polyadenylate-binding protein 7 (PAB7) from Arabidopsis thaliana (Mouse-ear cress).